The primary structure comprises 390 residues: Cell division protein FtsZ (390 aa).

GTP contacts are provided by residues 20 to 24 (GGGNN), 106 to 108 (GTG), Glu137, Arg141, and Asp184.

Belongs to the FtsZ family. Homodimer. Polymerizes to form a dynamic ring structure in a strictly GTP-dependent manner. Interacts directly with several other division proteins.

It is found in the cytoplasm. In terms of biological role, essential cell division protein that forms a contractile ring structure (Z ring) at the future cell division site. The regulation of the ring assembly controls the timing and the location of cell division. One of the functions of the FtsZ ring is to recruit other cell division proteins to the septum to produce a new cell wall between the dividing cells. Binds GTP and shows GTPase activity. In Mycoplasmopsis pulmonis (strain UAB CTIP) (Mycoplasma pulmonis), this protein is Cell division protein FtsZ.